A 500-amino-acid polypeptide reads, in one-letter code: MKTTLSHALGNNFLGASPLWYKQVVIAFLIINPIAVVTLGPFVTGWLFIIEFIFTLAMALKCYPLQPGGLIAIQAVLLGLTSSDGVYHEVNKNFDVILLLMFMVAGIYFMKDMLLFIFNKLLVRVKSKIVISLIFSFSAALLSAFLDALTVTAVLISVGVGFYSVYHKAASGQSSNKNHDHAKDDSILPINTEDLNEFRSFLRDLLMHGAVGTALGGVSTLVGEPQNLLIAKVAGWDFIDFFLYVAPVSMPVLACGLLTVVILEKTAWFDYGAQLPDTVRDILNNFEKEESQKQTNKHKAKLIIQGIVAIILILSLAFHIAEVGLVGLMVIVLLTAFNGITDEHQIGHAFEEALPFTALLVVFFTIVSVIHEQHLFQPIIDIVLHMPTDSQPIMFFIANGILSAISDNVFVATVYISEVKAALDAGTITREHFNTLAVAINTGTNLPSVATPNGQAAFLFLLTSAIAPLLRLSYGKMVWMALPYTVVLSVVGGLCVTYFL.

A run of 11 helical transmembrane segments spans residues 13-33, 34-54, 62-82, 97-117, 129-149, 242-262, 306-326, 350-370, 392-412, 449-469, and 477-497; these read FLGASPLWYKQVVIAFLIINP, IAVVTLGPFVTGWLFIIEFIF, CYPLQPGGLIAIQAVLLGLTS, ILLLMFMVAGIYFMKDMLLFI, IVISLIFSFSAALLSAFLDAL, FLYVAPVSMPVLACGLLTVVI, GIVAIILILSLAFHIAEVGLV, FEEALPFTALLVVFFTIVSVI, PIMFFIANGILSAISDNVFVA, VATPNGQAAFLFLLTSAIAPL, and MVWMALPYTVVLSVVGGLCVT.

It belongs to the NhaB Na(+)/H(+) (TC 2.A.34) antiporter family.

The protein resides in the cell inner membrane. It carries out the reaction 2 Na(+)(in) + 3 H(+)(out) = 2 Na(+)(out) + 3 H(+)(in). In terms of biological role, na(+)/H(+) antiporter that extrudes sodium in exchange for external protons. This is Na(+)/H(+) antiporter NhaB from Marinomonas sp. (strain MWYL1).